The following is a 405-amino-acid chain: DNA primase DnaG (405 aa).

One can recognise a Toprim domain in the interval 172–248 (DAIIIVEGRA…HVDYIARAPP (77 aa)). Mg(2+) contacts are provided by glutamate 178, aspartate 222, and aspartate 224. A disordered region spans residues 279–303 (ASGERAEAPPQPAQQPQQEQPAPQR). The segment covering 292-303 (QQPQQEQPAPQR) has biased composition (low complexity).

The protein belongs to the archaeal DnaG primase family. As to quaternary structure, forms a ternary complex with MCM helicase and DNA. Component of the archaeal exosome complex. Requires Mg(2+) as cofactor.

It carries out the reaction ssDNA + n NTP = ssDNA/pppN(pN)n-1 hybrid + (n-1) diphosphate.. Its function is as follows. RNA polymerase that catalyzes the synthesis of short RNA molecules used as primers for DNA polymerase during DNA replication. Also part of the exosome, which is a complex involved in RNA degradation. Acts as a poly(A)-binding protein that enhances the interaction between heteromeric, adenine-rich transcripts and the exosome. This Pyrobaculum arsenaticum (strain DSM 13514 / JCM 11321 / PZ6) protein is DNA primase DnaG.